Here is a 276-residue protein sequence, read N- to C-terminus: NADPH-dependent 7-cyano-7-deazaguanine reductase (276 aa).

83–85 (IES) is a substrate binding site. 85-86 (SK) lines the NADPH pocket. Catalysis depends on C184, which acts as the Thioimide intermediate. D191 (proton donor) is an active-site residue. A substrate-binding site is contributed by 223–224 (HE). 252–253 (RG) is a binding site for NADPH.

It belongs to the GTP cyclohydrolase I family. QueF type 2 subfamily. As to quaternary structure, homodimer.

Its subcellular location is the cytoplasm. It catalyses the reaction 7-aminomethyl-7-carbaguanine + 2 NADP(+) = 7-cyano-7-deazaguanine + 2 NADPH + 3 H(+). Its pathway is tRNA modification; tRNA-queuosine biosynthesis. Its function is as follows. Catalyzes the NADPH-dependent reduction of 7-cyano-7-deazaguanine (preQ0) to 7-aminomethyl-7-deazaguanine (preQ1). The protein is NADPH-dependent 7-cyano-7-deazaguanine reductase of Pseudomonas putida (strain ATCC 47054 / DSM 6125 / CFBP 8728 / NCIMB 11950 / KT2440).